A 2376-amino-acid polypeptide reads, in one-letter code: MPIFYESSSDASDAAPEFDLRNACQRIVTDDEYVVSSSTEPPLSQQLEPIAVVGMGCRLPGDVSSPSDFWRLMMEKRSGQTPKVPSSRFNIDAHFHPDNDRPGSFHVYGGYFINETLQEFDPAFFGITPVEATWMDPQQRKLLEVVYEAFESAGLTLDQLSGSDTACFMATFTADFQQMSFKEPSFRHSLAATGVDPGLLSNRVSHVFNLRGPSIVVNTACSSSVYALHNACNALRNHECSAAVVGGSNLILTVDQHMNTAKLGVLSPTSTCHTFNSYANGYGRAEGVGAIYLKRLSDAVKDGDPIRGVIRSSATNNNGRAPAVGITYPGFDGQRNVMMHAYQRSGLDPMLTGYFECHGTGTAIGDPLEVHAVSDVMNANRTEADGPLQMGAVKTNIGHSEAASGLSAVIKAILIAERNIIPPTRGLTDPNPKIDWKGWQINVPTESMTIPKHLPITRISVNSFGYGGTNAHTIIESPNSLLAFPQSYQYSMPGTTTKSKLARGAVKRNRPYLLVFSAHEIGALKRNATAYGRVAANYSLLDLSYTLANHRTRFHSKGMVVTTPASLHEDIVNGSPNLVLAHKKETATTLGFVFTGQGAQWARMGAQLMAYYPTFLTSIRRMDLALEDLNDAPSWTLEEVILQDSATSCVGEAEFSQPLCTAIQVALVQLFRLWGIQPSVTIGHSSGEIGAAFAAGYISEAEAIWIAYYRGQVVKNIDSVGAMMAVGLGAEAVAPYVESYEPEVVIACHNSPSGVTLSGSVEILKSIEGTLQAEGIFARLVKTNGKAYHSRHMLPAVERYESLIGKARQATTQKHVSSKTKMVSSVTNSVLADDAVLDEKYWSANLVSPVLFNQAVQTALKCKEVPEVDILIEIGPHSALSGPLRQIKTYLHADKLQYLPTLVRGFPCANQVLKLAGELFLRNYPLDLARVTAIEEVYPSGKIIPRMGNLIVDLPPYQWDKTKRYWAESRESKEQRSPRFPRHDVLGQLTTGASLAEPTWRNILRIKDLPWLRDHSLGGEAVFPAAGYLSMAMEAVTQINEMTEKPCKITSYVFRDIVIQQALVTPDDDNGIEVLLNMHPSRINTDDSGKQWWDFNVSSVSIEGHRKNHMAGSIAIRTSARSGLARKVPNLPQRASGRLWNHALKKVGFNYGPTFQDMDNITFDGSTYCAHASTNVKTAVMNDESRHVLHPAIVDSCLQLMIVAIWAGRASAMQFGAVPVRAEEIVIWKPKATHLTEGARATMFSWIDPRGQRLFNAHSQLVAEDRTVLMEIKNMRCIAYEAAIPQKLEAPIQPRPYSQLVYKPDVLWVHNTQTHLDVATFVELAEFKTPGLRVLVTDLMVAQSLIAKFPGIPMTLANRDVKEAEAEADPSGVKKFSLMSLDLTASLATQSYEKLKNSFDVVIAPNILSNSLECIAELLVEGGQAVLGVNGSTIVHDLEKAGLSGPVFSMKDTMFVTSKVRESDKPVSILVQLIYRHNPTEDITRLRLHLEETGFRSRISKLGDPCPPGSNVIMLADLEDPLVATMSEPEFQHLQTLLSDSANVLWVSCGDYLGAGIDPEAAMTLGLLRTLRSERASLKATFVDFVRTDLASEEFLSRTTSLAIALFDDEKKLETEYIARDGQLLLSRLIPAEEVNKTHGKIGRETKPQPFDPKAELVGRIQAGKVVFETALLDKPPLQQDEIEFRQLATGFNLEDQAAITGASFETDFSHETTGIVTKIGSAITKVSVGDKIVAFSASRFSTYQRVAECLVQVLGPEEPYTTIAGLPMYYGAALYGLETLARLQYQESVFILPGSGLLGAAAIWIARALHCLPYVVVRDSAEAEHVATTFSLPSAQILTEYRPEQLVDLDIDVVFSGSSVEPAVAREAWRHTPAFSRFVNCTAAASTSPLDSIPASRGASYLSVNFPRLFQKPRVLGTLLERIMVLYRQGSIPAPSITVRNITELNESIHSFVDSICDNKIVIAHQTSEGLVDIVESRPRLSLPPDATYLLVGCLGGLGRSLTSWMMKHGARNFAFLSRSGMDSEQAAILVNNLETRGANVQVFRGDATVKEDVEEAVRSIPADRPLRGVVHAAMVLRDGLFQNMAYENWTTSIRPKVLGSKHLTEVVADLNLDFFLMMSSVSGILGTPGQANYAAGNSYMDALARLRRSQGKPACAVVLPMILGVGVVAQNDGLEDSLKRKGMYGIDEEALLDSFEAAIIEQRPQTCQQNEALDHLIVGLDPAGLHKARQEAEGDVDAFWSADPRFSSLVHSMNVYGGGNQGGDGEAGSILTRLRAAGTESPAKAVDLVRDHFIAKLARILLVDEAEFGGDDNAERSIASYGVDSMIGAELRNWIFKDLGLDIAFQQLLSPSLTISKFSELVCGAQGIVVEQKV.

The Ketosynthase family 3 (KS3) domain maps to 47-477 (LEPIAVVGMG…GTNAHTIIES (431 aa)). Residues Cys-221, His-358, and His-399 each act as for beta-ketoacyl synthase activity in the active site. Residues 593–906 (VFTGQGAQWA…QYLPTLVRGF (314 aa)) form a malonyl-CoA:ACP transacylase (MAT) domain region. Ser-685 acts as the For malonyltransferase activity in catalysis. The segment at 983–1121 (HDVLGQLTTG…GSIAIRTSAR (139 aa)) is N-terminal hotdog fold. The segment at 983 to 1158 (HDVLGQLTTG…FNYGPTFQDM (176 aa)) is dehydratase (DH) domain. The PKS/mFAS DH domain maps to 983–1286 (HDVLGQLTTG…CIAYEAAIPQ (304 aa)). His-1015 functions as the Proton acceptor; for dehydratase activity in the catalytic mechanism. Positions 1131–1286 (LPQRASGRLW…CIAYEAAIPQ (156 aa)) are C-terminal hotdog fold. The active-site Proton donor; for dehydratase activity is the Asp-1195. Positions 1659–1964 (GRIQAGKVVF…DSICDNKIVI (306 aa)) are enoyl reductase (ER) domain. Residues 1988–2163 (ATYLLVGCLG…KPACAVVLPM (176 aa)) are ketoreductase (KR) domain. One can recognise a Carrier domain in the interval 2289–2368 (DLVRDHFIAK…KFSELVCGAQ (80 aa)). Position 2327 is an O-(pantetheine 4'-phosphoryl)serine (Ser-2327).

It participates in polyketide biosynthesis. Its function is as follows. Reducing polyketide synthase; part of the gene cluster that mediates the biosynthesis of depudecin, a highly oxidized eleven-carbon linear polyketide that acts as a histone deacetylase (HDAC) inhibitor and makes a small contribution to pathogenesis. The reducing polyketide synthase DEP5 is the central enzyme in depudecin biosynthesis by yielding the backbone polyketide chain. The monooxygenases DEP2 and DEP4, as well as the uncharacterized protein DEP1, then act as tailoring enzymes to modify the intermediate polyketide chain into depudecin. This chain is Reducing polyketide synthase DEP5, found in Alternaria brassicicola (Dark leaf spot agent).